Consider the following 427-residue polypeptide: Thymidine phosphorylase (427 aa).

The protein belongs to the thymidine/pyrimidine-nucleoside phosphorylase family. In terms of assembly, homodimer.

It carries out the reaction thymidine + phosphate = 2-deoxy-alpha-D-ribose 1-phosphate + thymine. Functionally, the enzymes which catalyze the reversible phosphorolysis of pyrimidine nucleosides are involved in the degradation of these compounds and in their utilization as carbon and energy sources, or in the rescue of pyrimidine bases for nucleotide synthesis. This Mycobacterium tuberculosis (strain CDC 1551 / Oshkosh) protein is Thymidine phosphorylase (deoA).